Here is a 562-residue protein sequence, read N- to C-terminus: Protein FAM83D-B (562 aa).

The segment at 424-472 (ITTQTTETSQCTTQTPAPTSSVARLSNSSNSSSSSFSSASTTSTGSNCS) is disordered. Positions 425–472 (TTQTTETSQCTTQTPAPTSSVARLSNSSNSSSSSFSSASTTSTGSNCS) are enriched in low complexity.

It belongs to the FAM83 family.

The protein localises to the cytoplasm. It localises to the cytoskeleton. The protein resides in the spindle. It is found in the spindle pole. In terms of biological role, may regulate cell proliferation, growth, migration and epithelial to mesenchymal transition. May also be important for proper chromosome congression and alignment during mitosis. In Xenopus laevis (African clawed frog), this protein is Protein FAM83D-B.